The following is a 344-amino-acid chain: Phenylalanine--tRNA ligase alpha subunit (344 aa).

A Mg(2+)-binding site is contributed by Glu-259.

The protein belongs to the class-II aminoacyl-tRNA synthetase family. Phe-tRNA synthetase alpha subunit type 1 subfamily. Tetramer of two alpha and two beta subunits. The cofactor is Mg(2+).

The protein resides in the cytoplasm. The enzyme catalyses tRNA(Phe) + L-phenylalanine + ATP = L-phenylalanyl-tRNA(Phe) + AMP + diphosphate + H(+). The polypeptide is Phenylalanine--tRNA ligase alpha subunit (Nitrosospira multiformis (strain ATCC 25196 / NCIMB 11849 / C 71)).